A 337-amino-acid polypeptide reads, in one-letter code: MAPIKIGINGFGRIGRLVARVALQRDDVELVAVNDPFISTDYMTYMFKYDSVHGAWKHHELKVKDEKTLLFGEKPVVVFGRRNPEEIPRASTGAEYIVESTGVFTDKDKAAAHLKGGAKKVIISAPSKDAPMFVVGVNEKEYKSDLHIVSNASCTTNCLAPLAKVINDRFGIVEGLMTTVHSITATQKTVDGPSAKDWRGGRAASFNIIPSSTGAAKAVGKVLPQLNGKLTGMSFRVPTVDVSVVDLTVRLEKKATYEQIKAAIKEESEGKLKGILGYTEDDVVSTDFVGDSRSSIFDAKAGIALNDNFVKLVSWYDNEWGYSTRVVDLIVHMASVQ.

NAD(+) is bound by residues 13–14 (RI), Asp35, and Arg82. Residues 153 to 155 (SCT), Thr184, 213 to 214 (TG), and Arg236 each bind D-glyceraldehyde 3-phosphate. Residue Cys154 is the Nucleophile of the active site. Residue Asn318 coordinates NAD(+).

It belongs to the glyceraldehyde-3-phosphate dehydrogenase family. As to quaternary structure, homotetramer.

Its subcellular location is the cytoplasm. The enzyme catalyses D-glyceraldehyde 3-phosphate + phosphate + NAD(+) = (2R)-3-phospho-glyceroyl phosphate + NADH + H(+). The protein operates within carbohydrate degradation; glycolysis; pyruvate from D-glyceraldehyde 3-phosphate: step 1/5. Key enzyme in glycolysis that catalyzes the first step of the pathway by converting D-glyceraldehyde 3-phosphate (G3P) into 3-phospho-D-glyceroyl phosphate. Essential for the maintenance of cellular ATP levels and carbohydrate metabolism. This chain is Glyceraldehyde-3-phosphate dehydrogenase, cytosolic (GAPC), found in Antirrhinum majus (Garden snapdragon).